Reading from the N-terminus, the 145-residue chain is Large-conductance mechanosensitive channel (145 aa).

3 helical membrane-spanning segments follow: residues 14–34 (VMDLAVGVIIGGAFGGIVKSL), 38–58 (LIMPIVGAIFGGFDFSNYFLP), and 81–101 (GSFLTVLINFLILAWIIFLMV).

Belongs to the MscL family. As to quaternary structure, homopentamer.

The protein localises to the cell inner membrane. Its function is as follows. Channel that opens in response to stretch forces in the membrane lipid bilayer. May participate in the regulation of osmotic pressure changes within the cell. The sequence is that of Large-conductance mechanosensitive channel from Rhizobium etli (strain CIAT 652).